A 468-amino-acid chain; its full sequence is Glutamate--tRNA ligase (468 aa).

Positions 12–22 match the 'HIGH' region motif; the sequence is PSPTGFIHLGN. The short motif at 244 to 248 is the 'KMSKS' region element; it reads KMSKR. Lysine 247 is a binding site for ATP.

The protein belongs to the class-I aminoacyl-tRNA synthetase family. Glutamate--tRNA ligase type 1 subfamily. As to quaternary structure, monomer.

It localises to the cytoplasm. It catalyses the reaction tRNA(Glu) + L-glutamate + ATP = L-glutamyl-tRNA(Glu) + AMP + diphosphate. Its function is as follows. Catalyzes the attachment of glutamate to tRNA(Glu) in a two-step reaction: glutamate is first activated by ATP to form Glu-AMP and then transferred to the acceptor end of tRNA(Glu). This is Glutamate--tRNA ligase from Polynucleobacter necessarius subsp. necessarius (strain STIR1).